Reading from the N-terminus, the 125-residue chain is Photosystem II extrinsic protein U (125 aa).

The first 29 residues, 1–29 (MKRLLSWLTGLVVIAGLLIGLLVPPSVSA), serve as a signal peptide directing secretion.

Belongs to the PsbU family. PSII is composed of 1 copy each of membrane proteins PsbA, PsbB, PsbC, PsbD, PsbE, PsbF, PsbH, PsbI, PsbJ, PsbK, PsbL, PsbM, PsbT, PsbX, PsbY, PsbZ, Psb30/Ycf12, peripheral proteins PsbO, CyanoQ (PsbQ), PsbU, PsbV and a large number of cofactors. It forms dimeric complexes.

It is found in the cellular thylakoid membrane. One of the extrinsic, lumenal subunits of photosystem II (PSII). PSII is a light-driven water plastoquinone oxidoreductase, using light energy to abstract electrons from H(2)O, generating a proton gradient subsequently used for ATP formation. The extrinsic proteins stabilize the structure of photosystem II oxygen-evolving complex (OEC), the ion environment of oxygen evolution and protect the OEC against heat-induced inactivation. This Synechococcus sp. (strain CC9311) protein is Photosystem II extrinsic protein U.